The primary structure comprises 324 residues: Protein translocase subunit SecF (324 aa).

6 consecutive transmembrane segments (helical) span residues 16–36 (FFWA…ASLV), 145–165 (LIRS…VYIW), 174–194 (LGSV…FALF), 201–221 (TTVA…VVVF), 247–269 (TLSR…LVFG), and 276–295 (FVFA…VYMA).

This sequence belongs to the SecD/SecF family. SecF subfamily. Forms a complex with SecD. Part of the essential Sec protein translocation apparatus which comprises SecA, SecYEG and auxiliary proteins SecDF-YajC and YidC.

It is found in the cell inner membrane. In terms of biological role, part of the Sec protein translocase complex. Interacts with the SecYEG preprotein conducting channel. SecDF uses the proton motive force (PMF) to complete protein translocation after the ATP-dependent function of SecA. In Cereibacter sphaeroides (strain ATCC 17023 / DSM 158 / JCM 6121 / CCUG 31486 / LMG 2827 / NBRC 12203 / NCIMB 8253 / ATH 2.4.1.) (Rhodobacter sphaeroides), this protein is Protein translocase subunit SecF.